Reading from the N-terminus, the 775-residue chain is Ribonucleoside-diphosphate reductase large subunit (775 aa).

Substrate is bound by residues threonine 200, 215–216, glycine 246, 427–431, and 606–610; these read SC, NLCTE, and PTVSS. Cysteine 216 and cysteine 444 are joined by a disulfide. Asparagine 427 acts as the Proton acceptor in catalysis. Cysteine 429 serves as the catalytic Cysteine radical intermediate. Residue glutamate 431 is the Proton acceptor of the active site.

It belongs to the ribonucleoside diphosphate reductase large chain family. Heterotetramer composed of a homodimer of the large subunit (R1) and a homodimer of the small subunit (R2). Larger multisubunit protein complex are also active, composed of (R1)n(R2)n.

It carries out the reaction a 2'-deoxyribonucleoside 5'-diphosphate + [thioredoxin]-disulfide + H2O = a ribonucleoside 5'-diphosphate + [thioredoxin]-dithiol. In terms of biological role, ribonucleoside-diphosphate reductase holoenzyme provides the precursors necessary for viral DNA synthesis. Allows virus growth in non-dividing cells, as well as reactivation from latency in infected hosts. Catalyzes the biosynthesis of deoxyribonucleotides from the corresponding ribonucleotides. The protein is Ribonucleoside-diphosphate reductase large subunit of Homo sapiens (Human).